A 270-amino-acid chain; its full sequence is MGLLTPNSLPLLDVQHLTDEQTALAVERLNLFYGDKQVLHDISFCVPKHRVTALIGPSGCGKSTLLRCFNRMNDLLDNCHFDGEIRLGDEIITDKTTDVAALRRRVGMVFQRPNPFPKSIYENVVYGLRLQGVRDRRVLDEAVERSLRAAALWHEVKDRLRENAFRLSSGQQQRLVIARAIAIEPEVLLLDEPTSALDPISTLTIEELITTLKQQYTVVLVTHNMQQAARVSDYTAFIHQGRLVEYNNTDALFTSPYQRQTEDYITGRYG.

The ABC transporter domain maps to 24–265 (LAVERLNLFY…PYQRQTEDYI (242 aa)). 56–63 (GPSGCGKS) is an ATP binding site.

The protein belongs to the ABC transporter superfamily. Phosphate importer (TC 3.A.1.7) family. As to quaternary structure, the complex is composed of two ATP-binding proteins (PstB), two transmembrane proteins (PstC and PstA) and a solute-binding protein (PstS).

It localises to the cell inner membrane. It carries out the reaction phosphate(out) + ATP + H2O = ADP + 2 phosphate(in) + H(+). Its function is as follows. Part of the ABC transporter complex PstSACB involved in phosphate import. Responsible for energy coupling to the transport system. The chain is Phosphate import ATP-binding protein PstB 1 from Yersinia pestis bv. Antiqua (strain Antiqua).